The chain runs to 406 residues: Peptide transporter imqD (406 aa).

The segment at 1–25 (MTAPADSTEKSETSETTTLQTTEVS) is disordered. Low complexity predominate over residues 14 to 25 (SETTTLQTTEVS). 6 helical membrane passes run 184 to 204 (GLVA…LSQA), 220 to 240 (IPND…GPVI), 262 to 282 (ATGF…QKII), 309 to 329 (VFLQ…SFVT), 344 to 364 (AVVQ…GIAI), and 373 to 393 (LIWM…VFWI).

The protein belongs to the major facilitator superfamily. Proton-dependent oligopeptide transporter (POT/PTR) (TC 2.A.17) family.

Its subcellular location is the membrane. Its function is as follows. Peptide transporter; part of the gene cluster that mediates the biosynthesis of imizoquins A to D, tripeptide-derived alkaloids that serve a protective role against oxidative stress that are essential for normal germination. In Aspergillus flavus (strain ATCC 200026 / FGSC A1120 / IAM 13836 / NRRL 3357 / JCM 12722 / SRRC 167), this protein is Peptide transporter imqD.